The primary structure comprises 428 residues: MQILVYDNLDEKQKEEALKRPAISAKDEISKIVSSIIKEVQEKGDKALIEQALKFDKAEISKIKITQEEITQASNRLDKDLQEAILVAYENIKKFHEAQIPHEIALETTKGVKCEVLTRPIEKVGLYIPGGLAPLFSTVLMLAIPAKIAGCEKIVLASPAKINDAVLFCAKLCGVDEIYQMGGAGAIAALTYGTQSVLKVDKIFGPGNAFVTEAKRQVSSDINGAAIDMQAGPSEVLVIADDLANEKFVASDLLSQAEHGADSQVILVCLSQDFAKKASDEVQSQLELLPRKELASKSIANSRIIIAKDLNQALEISNLYAPEHLIIQTQNPRELLKGVKHAGSVFLGAYSPESMGDYASGTNHVLPTYGLTKTHSSLGLADFSKRMTVQELSKEGFLALGKSVEILAQNEHLDAHKNAVTFRLESLK.

Substrate-binding residues include S234, Q256, and H259. The Zn(2+) site is built by Q256 and H259. Active-site proton acceptor residues include E323 and H324. The substrate site is built by H324, D357, E411, and H416. Residue D357 participates in Zn(2+) binding. Residue H416 coordinates Zn(2+).

Belongs to the histidinol dehydrogenase family. Requires Zn(2+) as cofactor.

The enzyme catalyses L-histidinol + 2 NAD(+) + H2O = L-histidine + 2 NADH + 3 H(+). It participates in amino-acid biosynthesis; L-histidine biosynthesis; L-histidine from 5-phospho-alpha-D-ribose 1-diphosphate: step 9/9. Catalyzes the sequential NAD-dependent oxidations of L-histidinol to L-histidinaldehyde and then to L-histidine. The sequence is that of Histidinol dehydrogenase from Campylobacter jejuni subsp. jejuni serotype O:2 (strain ATCC 700819 / NCTC 11168).